A 342-amino-acid polypeptide reads, in one-letter code: DNA-directed RNA polymerase subunit alpha (342 aa).

The alpha N-terminal domain (alpha-NTD) stretch occupies residues 1–238; the sequence is MESLNVNAKN…DQLNMFVNFD (238 aa). The interval 254-342 is alpha C-terminal domain (alpha-CTD); sequence FNKNLLRKVD…EMSKKLEEQI (89 aa).

Belongs to the RNA polymerase alpha chain family. As to quaternary structure, homodimer. The RNAP catalytic core consists of 2 alpha, 1 beta, 1 beta' and 1 omega subunit. When a sigma factor is associated with the core the holoenzyme is formed, which can initiate transcription.

The catalysed reaction is RNA(n) + a ribonucleoside 5'-triphosphate = RNA(n+1) + diphosphate. Its function is as follows. DNA-dependent RNA polymerase catalyzes the transcription of DNA into RNA using the four ribonucleoside triphosphates as substrates. The polypeptide is DNA-directed RNA polymerase subunit alpha (Pelagibacter ubique (strain HTCC1062)).